Consider the following 210-residue polypeptide: T-cell antigen CD7 (210 aa).

An N-terminal signal peptide occupies residues 1–23; the sequence is MTQQAVLALLLTLAGILPGPLDA. In terms of domain architecture, Ig-like spans 24–129; that stretch reads QDVHQSPRLT…RGLFTTVVVK (106 aa). Topologically, residues 24-150 are extracellular; the sequence is QDVHQSPRLT…EPLQTSFSFP (127 aa). 3 N-linked (GlcNAc...) asparagine glycosylation sites follow: N42, N86, and N93. An intrachain disulfide couples C45 to C111. Residues 151–171 traverse the membrane as a helical segment; sequence AAIAVGFFFTGLLLGVVCSML. A lipid anchor (S-palmitoyl cysteine) is attached at C168. Over 172 to 210 the chain is Cytoplasmic; the sequence is RKIQIKKLCASGIKESPCVVYEDMSYSNRKTPCIPNQYQ.

As to quaternary structure, interacts with SECTM1.

The protein resides in the membrane. Transmembrane glycoprotein expressed by T-cells and natural killer (NK) cells and their precursors. Plays a costimulatory role in T-cell activation upon binding to its ligand K12/SECTM1. In turn, mediates the production of cytokines such as IL-2. On resting NK-cells, CD7 activation results in a significant induction of gamma-interferon levels. In Mus musculus (Mouse), this protein is T-cell antigen CD7 (Cd7).